Here is a 764-residue protein sequence, read N- to C-terminus: Sesterfisherol synthase (764 aa).

Positions E2–N331 are terpene cyclase. D95 serves as a coordination point for Mg(2+). Substrate is bound by residues D95, R187 to D190, N231, S235 to E239, and R324 to H325. The DDXXD 1 signature appears at D95–E99. An NSE/DTE motif is present at residues N231 to E239. Residues S332–L759 form a prenyltransferase region. Residues L347 to R372 form a disordered region. Polar residues predominate over residues I348–K358. Isopentenyl diphosphate contacts are provided by K476, R479, and H508. Positions 515 and 519 each coordinate Mg(2+). The DDXXD 2 motif lies at D515–D519. Dimethylallyl diphosphate is bound at residue R524. An isopentenyl diphosphate-binding site is contributed by R525. Residues K602, T603, Q638, N645, K655, and K665 each contribute to the dimethylallyl diphosphate site.

In the N-terminal section; belongs to the terpene synthase family. It in the C-terminal section; belongs to the FPP/GGPP synthase family. As to quaternary structure, hexamer. Requires Mg(2+) as cofactor.

It catalyses the reaction isopentenyl diphosphate + (2E,6E)-farnesyl diphosphate = (2E,6E,10E)-geranylgeranyl diphosphate + diphosphate. It carries out the reaction isopentenyl diphosphate + (2E,6E,10E)-geranylgeranyl diphosphate = (2E,6E,10E,14E)-geranylfarnesyl diphosphate + diphosphate. The enzyme catalyses (2E,6E,10E,14E)-geranylfarnesyl diphosphate + H2O = sesterfisherol + diphosphate. It functions in the pathway secondary metabolite biosynthesis; terpenoid biosynthesis. In terms of biological role, bifunctional terpene synthase; part of the gene cluster that mediates the biosynthesis of sesterfisheric acid. The bifunctional terpene synthase NfSS converts dimethylallyl diphosphate (DMAPP) and isopentenyl diphosphate (IPP) into sesterfisherol. The C-terminal prenyltransferase (PT) domain of NfSS catalyzes formation of geranylfarnesyl pyrophosphate (GFPP), whereas the N-terminal terpene cyclase (TC) domain catalyzes the cyclization of GFPP to sesterfisherol. The cytochrome P450 monooxygenase NfP450 then catalyzes oxidative modifications of sesterfisherol into sesterfisheric acid. The protein is Sesterfisherol synthase of Neosartorya fischeri (strain ATCC 1020 / DSM 3700 / CBS 544.65 / FGSC A1164 / JCM 1740 / NRRL 181 / WB 181) (Aspergillus fischerianus).